Here is a 181-residue protein sequence, read N- to C-terminus: MASSVSGAEEVRVSALTPLKLVGLVCVFLALCLDVGAVLSPAWVTADDQYHLSLWKSCSKPAASATWRCNSTLGTDWQIATLALLLGGAFLILLSFLVALVSVCIRSRRRFYRPVAIMLFAAVVLQACCLVLYPIKFIETISLRIYHEFNWGYGLAWGATIFSFGGAILYCLNPKNYEDYY.

The next 4 membrane-spanning stretches (helical) occupy residues 21-41 (LVGLVCVFLALCLDVGAVLSP), 81-101 (TLALLLGGAFLILLSFLVALV), 115-135 (VAIMLFAAVVLQACCLVLYPI), and 152-172 (GYGLAWGATIFSFGGAILYCL).

The protein belongs to the TMEM47 family.

Its subcellular location is the membrane. The protein resides in the cell junction. It is found in the adherens junction. In terms of biological role, regulates cell junction organization in epithelial cells. The protein is Transmembrane protein 47 (tmem47) of Danio rerio (Zebrafish).